The chain runs to 232 residues: Ubiquinone biosynthesis O-methyltransferase (232 aa).

S-adenosyl-L-methionine-binding residues include Arg-36, Gly-55, Asp-76, and Met-120.

Belongs to the methyltransferase superfamily. UbiG/COQ3 family.

It carries out the reaction a 3-demethylubiquinol + S-adenosyl-L-methionine = a ubiquinol + S-adenosyl-L-homocysteine + H(+). It catalyses the reaction a 3-(all-trans-polyprenyl)benzene-1,2-diol + S-adenosyl-L-methionine = a 2-methoxy-6-(all-trans-polyprenyl)phenol + S-adenosyl-L-homocysteine + H(+). Its pathway is cofactor biosynthesis; ubiquinone biosynthesis. In terms of biological role, O-methyltransferase that catalyzes the 2 O-methylation steps in the ubiquinone biosynthetic pathway. This chain is Ubiquinone biosynthesis O-methyltransferase, found in Paraburkholderia xenovorans (strain LB400).